The following is a 163-amino-acid chain: Nucleotide-binding protein HD_0358 (163 aa).

This sequence belongs to the YajQ family.

Nucleotide-binding protein. The sequence is that of Nucleotide-binding protein HD_0358 from Haemophilus ducreyi (strain 35000HP / ATCC 700724).